The following is a 145-amino-acid chain: Peptidyl-prolyl cis-trans isomerase (145 aa).

The PPIase cyclophilin-type domain maps to 1–145; the sequence is MTQAILETEK…LSVKIVTDAA (145 aa).

It belongs to the cyclophilin-type PPIase family.

It carries out the reaction [protein]-peptidylproline (omega=180) = [protein]-peptidylproline (omega=0). In terms of biological role, PPIases accelerate the folding of proteins. It catalyzes the cis-trans isomerization of proline imidic peptide bonds in oligopeptides. This chain is Peptidyl-prolyl cis-trans isomerase (rot), found in Synechococcus elongatus (strain ATCC 33912 / PCC 7942 / FACHB-805) (Anacystis nidulans R2).